We begin with the raw amino-acid sequence, 466 residues long: Ras GTPase-activating protein-binding protein 1 (466 aa).

The 123-residue stretch at 11–133 folds into the NTF2 domain; it reads VGREFVRQYY…FYVHNDIFRY (123 aa). Glycyl lysine isopeptide (Lys-Gly) (interchain with G-Cter in ubiquitin) cross-links involve residues Lys-36, Lys-50, Lys-59, Lys-64, Lys-76, and Lys-123. The tract at residues 142 to 225 is acidic disordered region; sequence VTEPQEESEE…EPVLEETVPE (84 aa). A Phosphothreonine modification is found at Thr-143. Disordered stretches follow at residues 144–172 and 184–243; these read EPQEESEEEVEEPEERQQTPEVVPDDSGT and EEHL…QTVQ. Composition is skewed to acidic residues over residues 145–157 and 185–206; these read PQEESEEEVEEPE and EHLEEPVAEPEPDPEPEPEQEP. Ser-149 carries the post-translational modification Phosphoserine. Phosphoserine is present on residues Ser-231, Ser-232, Ser-250, and Ser-253. The disordered stretch occupies residues 255–329; that stretch reads TSKNLPPSGA…REAGEQGDIE (75 aa). Composition is skewed to basic and acidic residues over residues 297-307 and 318-329; these read PQRDQRVREQR and PIREAGEQGDIE. In terms of domain architecture, RRM spans 340–415; the sequence is HQLFIGNLPH…VRLNVEEKKT (76 aa). Residues Lys-353 and Lys-357 each participate in a glycyl lysine isopeptide (Lys-Gly) (interchain with G-Cter in ubiquitin) cross-link. Phosphoserine is present on Ser-373. Lys-376 is covalently cross-linked (Glycyl lysine isopeptide (Lys-Gly) (interchain with G-Cter in ubiquitin)). At Lys-376 the chain carries N6-acetyllysine; alternate. A Glycyl lysine isopeptide (Lys-Gly) (interchain with G-Cter in SUMO2); alternate cross-link involves residue Lys-376. Lys-393 is covalently cross-linked (Glycyl lysine isopeptide (Lys-Gly) (interchain with G-Cter in ubiquitin); alternate). Residues 410–466 are RG-rich region; sequence VEEKKTRAAREGDRRDNRLRGPGGPRGGLGGGMRGPPRGGMVQKPGFGVGRGLAPRQ. A compositionally biased stretch (basic and acidic residues) spans 413-428; it reads KKTRAAREGDRRDNRL. Residues 413–466 are disordered; sequence KKTRAAREGDRRDNRLRGPGGPRGGLGGGMRGPPRGGMVQKPGFGVGRGLAPRQ. At Arg-429 the chain carries Asymmetric dimethylarginine. A compositionally biased stretch (gly residues) spans 430–447; that stretch reads GPGGPRGGLGGGMRGPPR. Position 435 is an asymmetric dimethylarginine; alternate (Arg-435). Arg-435, Arg-447, Arg-460, and Arg-465 each carry omega-N-methylarginine; alternate. Arg-460 is subject to Dimethylated arginine; alternate.

Homodimer and oligomer. Component of a TAU mRNP complex, at least composed of IGF2BP1, ELAVL4 and G3BP1. Binds to the SH3 domain of Ras GTPase-activating protein (RASA1) in proliferating cells. No interaction in quiescent cells. Interacts (via NTF2 domain) with USP10; inhibiting stress granule formation by lowering G3BP1 valence. Interacts (via NTF2 domain) with CAPRIN1; promoting stress granule formation by lowering the saturation-concentration of G3BP1. Interacts (via NTF2 domain) with UBAP2L; promoting stress granule formation. Associates (via RG-rich region) with 40S ribosome subunits. Interacts with RPTOR and SPAG5; this complex is increased by oxidative stress. Interacts with ATXN2L. Interacts with STYXL1. Interacts with CGAS (via N-terminus); this interaction promotes the DNA-binding and activation of CGAS. Interacts (via C-terminus) with RIGI. Interacts with PABPC1. Interacts with QKI (isoforms QKI6 and QKI7); directing N(7)-methylguanine-containing mRNAs to stress granules. The cofactor is Mg(2+). In terms of processing, phosphorylation of the acidic disordered region regulates stress granule assembly. RASA1-dependent phosphorylation of Ser-149 induces a conformational change that prevents self-association. Dephosphorylation after HRAS activation is required for stress granule assembly. Ser-149 phosphorylation induces partial nuclear localization. Arg-435 is dimethylated, probably to asymmetric dimethylarginine. Post-translationally, ubiquitinated by TRIM21 via 'Lys-63'-linked polyubiquitination in the NTF2 domain in response to heat shock, leading to stress granule disassembly: ubiquitination promotes interaction with the FAF2 adapter, followed by interaction with VCP, which extracts G3BP1 from stress granules, leading to stress granule disassembly. In case of prolonged stress, ubiquitination by TRIM21 leads to autophagy-dependent degradation of G3BP1 via recruitment of ubiquitinated G3BP1 by SQSTM1 and/or CALCOCO2 to autophagosomes.

Its subcellular location is the cytoplasm. It localises to the cytosol. It is found in the perikaryon. The protein localises to the stress granule. The protein resides in the nucleus. The enzyme catalyses ATP + H2O = ADP + phosphate + H(+). Its activity is regulated as follows. Under physiological conditions, G3BP1 adopts a compact state that is stabilized by intramolecular interactions between the RG-rich and the acidic regions that inhibit phase separation. Upon stress, polysomes disassemble and mRNAs are released in an unfolded protein-free state. Binding of unfolded mRNA to G3BP1 outcompetes the intramolecular interactions and RNA-bound G3BP1 adopts an expanded conformation in which the RG-rich region becomes exposed to engage in protein-protein and protein-RNA interactions, allowing physical cross-linking of RNA molecules to form protein-RNA condensates, leading to liquid-liquid phase separation (LLPS). Protein involved in various processes, such as stress granule formation and innate immunity. Plays an essential role in stress granule formation. Stress granules are membraneless compartments that store mRNAs and proteins, such as stalled translation pre-initiation complexes, in response to stress. Promotes formation of stress granules phase-separated membraneless compartment by undergoing liquid-liquid phase separation (LLPS) upon unfolded RNA-binding: functions as a molecular switch that triggers RNA-dependent LLPS in response to a rise in intracellular free RNA concentrations. Also acts as an ATP- and magnesium-dependent helicase: unwinds DNA/DNA, RNA/DNA, and RNA/RNA substrates with comparable efficiency. Acts unidirectionally by moving in the 5' to 3' direction along the bound single-stranded DNA. Unwinds preferentially partial DNA and RNA duplexes having a 17 bp annealed portion and either a hanging 3' tail or hanging tails at both 5'- and 3'-ends. Plays an essential role in innate immunity by promoting CGAS and RIGI activity. Participates in the DNA-triggered cGAS/STING pathway by promoting the DNA binding and activation of CGAS. Triggers the condensation of cGAS, a process probably linked to the formation of membrane-less organelles. Also enhances RIGI-induced type I interferon production probably by helping RIGI at sensing pathogenic RNA. May also act as a phosphorylation-dependent sequence-specific endoribonuclease in vitro: Cleaves exclusively between cytosine and adenine and cleaves MYC mRNA preferentially at the 3'-UTR. In Pongo abelii (Sumatran orangutan), this protein is Ras GTPase-activating protein-binding protein 1 (G3BP1).